A 156-amino-acid polypeptide reads, in one-letter code: 3-hydroxyacyl-[acyl-carrier-protein] dehydratase FabZ (156 aa).

His-54 is an active-site residue.

The protein belongs to the thioester dehydratase family. FabZ subfamily.

Its subcellular location is the cytoplasm. The catalysed reaction is a (3R)-hydroxyacyl-[ACP] = a (2E)-enoyl-[ACP] + H2O. Functionally, involved in unsaturated fatty acids biosynthesis. Catalyzes the dehydration of short chain beta-hydroxyacyl-ACPs and long chain saturated and unsaturated beta-hydroxyacyl-ACPs. The chain is 3-hydroxyacyl-[acyl-carrier-protein] dehydratase FabZ from Koribacter versatilis (strain Ellin345).